Reading from the N-terminus, the 460-residue chain is Argininosuccinate lyase (460 aa).

This sequence belongs to the lyase 1 family. Argininosuccinate lyase subfamily.

The protein resides in the cytoplasm. It carries out the reaction 2-(N(omega)-L-arginino)succinate = fumarate + L-arginine. It functions in the pathway amino-acid biosynthesis; L-arginine biosynthesis; L-arginine from L-ornithine and carbamoyl phosphate: step 3/3. In Streptococcus uberis (strain ATCC BAA-854 / 0140J), this protein is Argininosuccinate lyase.